Reading from the N-terminus, the 131-residue chain is Histone H2B.2 (131 aa).

The segment covering 1 to 19 (MSSAAEKKPASKAPAEKKP) has biased composition (basic and acidic residues). A disordered region spans residues 1 to 37 (MSSAAEKKPASKAPAEKKPAAKKTSTSVDGKKRSKVR). Lys-7 and Lys-8 each carry N6-acetyllysine; alternate. Glycyl lysine isopeptide (Lys-Gly) (interchain with G-Cter in SUMO); alternate cross-links involve residues Lys-7 and Lys-8. Ser-11 is modified (phosphoserine). Lys-12 is subject to N6-acetyllysine. Residues Lys-17, Lys-18, Lys-22, and Lys-23 each carry the N6-acetyllysine; alternate modification. Glycyl lysine isopeptide (Lys-Gly) (interchain with G-Cter in SUMO); alternate cross-links involve residues Lys-17 and Lys-18. Position 22 is an N6-butyryllysine; alternate (Lys-22). Lys-23 bears the N6-methyllysine; alternate mark. Lys-35 bears the N6-succinyllysine mark. An N6,N6-dimethyllysine modification is found at Lys-38. Lys-47 is modified (N6-succinyllysine). A Glycyl lysine isopeptide (Lys-Gly) (interchain with G-Cter in ubiquitin) cross-link involves residue Lys-124.

The protein belongs to the histone H2B family. In terms of assembly, the nucleosome is a histone octamer containing two molecules each of H2A, H2B, H3 and H4 assembled in one H3-H4 heterotetramer and two H2A-H2B heterodimers. The octamer wraps approximately 147 bp of DNA. Interacts with NAP1. In terms of processing, monoubiquitinated by the RAD6/UBC2-BRE1 complex to form H2BK123ub1. H2BK123ub1 gives a specific tag for epigenetic transcriptional activation and is also prerequisite for H3K4me and H3K79me formation. H2BK123ub1 also modulates the formation of double-strand breaks during meiosis and is a prerequisite for DNA-damage checkpoint activation. Deubiquitination is performed by UBP8 in presence of SGF11. Post-translationally, phosphorylated by STE20 to form H2BS10ph during progression through meiotic prophase. May be correlated with chromosome condensation. H2BS10ph is also formed after H(2)O(2) treatment, and is a step leading to apoptosis. Acetylated by GCN5, a component of the SAGA complex, to form H2BK11ac and H2BK16ac. H2BK16ac can also be formed by ESA1, a component of the NuA4 histone acetyltransferase (HAT) complex. Acetylation of N-terminal lysines and particularly formation of H2BK11acK16ac has a positive effect on transcription. In terms of processing, sumoylation to form H2BK6su or H2BK7su, and probably also H2BK16su or H2BK17su, occurs preferentially near the telomeres and represses gene transcription.

It is found in the nucleus. The protein resides in the chromosome. Functionally, core component of nucleosome. Nucleosomes wrap and compact DNA into chromatin, limiting DNA accessibility to the cellular machineries which require DNA as a template. Histones thereby play a central role in transcription regulation, DNA repair, DNA replication and chromosomal stability. DNA accessibility is regulated via a complex set of post-translational modifications of histones, also called histone code, and nucleosome remodeling. The sequence is that of Histone H2B.2 (HTB2) from Saccharomyces cerevisiae (strain ATCC 204508 / S288c) (Baker's yeast).